We begin with the raw amino-acid sequence, 464 residues long: Soluble pyridine nucleotide transhydrogenase (464 aa).

FAD is bound at residue 35–44 (DSRRVVGGNC).

It belongs to the class-I pyridine nucleotide-disulfide oxidoreductase family. It depends on FAD as a cofactor.

It is found in the cytoplasm. It carries out the reaction NAD(+) + NADPH = NADH + NADP(+). Conversion of NADPH, generated by peripheral catabolic pathways, to NADH, which can enter the respiratory chain for energy generation. The protein is Soluble pyridine nucleotide transhydrogenase of Pseudomonas aeruginosa (strain LESB58).